Reading from the N-terminus, the 647-residue chain is Solute carrier family 23 member 2 (647 aa).

The span at 1 to 11 (MMGVGKNTSKS) shows a compositional bias: polar residues. Residues 1-26 (MMGVGKNTSKSVEVGGSTEGKYEEEA) are disordered. Residues 8–109 (TSKSVEVGGS…LCIFLGLQHY (102 aa)) lie on the Cytoplasmic side of the membrane. Serine 69 is subject to Phosphoserine. Threonine 74 carries the post-translational modification Phosphothreonine. Phosphoserine is present on serine 77. Threonine 78 carries the post-translational modification Phosphothreonine. At serine 80 the chain carries Phosphoserine. Residues 110–130 (LTCFSGTIAVPFLLADAMCVG) form a helical membrane-spanning segment. At 131–138 (DDQWATSQ) the chain is on the extracellular side. Residues 139–159 (LIGTIFFCVGITTLLQTTFGC) traverse the membrane as a helical segment. A topological domain (cytoplasmic) is located at residue arginine 160. A helical membrane pass occupies residues 161 to 181 (LPLFQASAFAFLAPARAILSL). Topologically, residues 182 to 215 (DKWKCNTTEITVANGTAELLEHIWHPRIQEIQGA) are extracellular. Residues asparagine 187 and asparagine 195 are each glycosylated (N-linked (GlcNAc...) asparagine). The helical transmembrane segment at 216-236 (IIMSSLIEVVIGLLGLPGALL) threads the bilayer. Residues 237–263 (RYIGPLTITPTVALIGLSGFQAAGERA) lie on the Cytoplasmic side of the membrane. Residues 264–281 (GKHWGIAMLTIFLVLLFS) form a helical membrane-spanning segment. Residues 282–285 (QYAR) lie on the Extracellular side of the membrane. An intramembrane region (helical) is located at residues 286 to 299 (NVKFPLPIYKSKKG). Topologically, residues 300-306 (WTAYKLQ) are extracellular. The helical transmembrane segment at 307–327 (LFKMFPIILAILVSWLLCFIF) threads the bilayer. At 328–368 (TVTDVFPSNSTDYGYYARTDARKGVLLVAPWFKVPYPFQWG) the chain is on the cytoplasmic side. A helical membrane pass occupies residues 369–389 (MPTVSAAGVIGMLSAVVASII). The Extracellular portion of the chain corresponds to 390–414 (ESIGDYYACARLSCAPPPPIHAINR). The helical transmembrane segment at 415 to 435 (GIFVEGLSCVLDGVFGTGNGS) threads the bilayer. Residues 436-458 (TSSSPNIGVLGITKVGSRRVIQY) lie on the Cytoplasmic side of the membrane. Residues 459 to 479 (GAALMLGLGMIGKFSALFASL) traverse the membrane as a helical segment. Over 480–482 (PDP) the chain is Extracellular. Residues 483–503 (VLGALFCTLFGMITAVGLSNL) traverse the membrane as a helical segment. Over 504-513 (QFIDLNSSRN) the chain is Cytoplasmic. The helical transmembrane segment at 514-534 (LFVLGFSIFFGLVLPSYLRQN) threads the bilayer. Residues 535–544 (PLVTGITGID) lie on the Extracellular side of the membrane. A helical transmembrane segment spans residues 545–565 (QVLNVLLTTAMFVGGCVAFIL). The Cytoplasmic segment spans residues 566–647 (DNTIPGTPEE…SSDKDSQATV (82 aa)). Threonine 646 is modified (phosphothreonine).

This sequence belongs to the nucleobase:cation symporter-2 (NCS2) (TC 2.A.40) family. Interacts with CLSTN3. Phosphorylated. Highly expressed in neural, neuroendocrine, exocrine and endothelial tissues and in osteoblasts. Detected in neurons throughout the central nervous system, in meninges and choroid plexus, in the anterior pituitary, the intermediate lobe, in pancreas, adrenal cortex, gastric glands, and in the inner nuclear layer of the retina.

It is found in the cell membrane. The catalysed reaction is L-ascorbate(out) + 2 Na(+)(out) = L-ascorbate(in) + 2 Na(+)(in). Its function is as follows. Sodium/ascorbate cotransporter. Mediates electrogenic uptake of vitamin C, with a stoichiometry of 2 Na(+) for each ascorbate. The sequence is that of Solute carrier family 23 member 2 (Slc23a2) from Rattus norvegicus (Rat).